A 644-amino-acid chain; its full sequence is Macrolide export ATP-binding/permease protein MacB (644 aa).

Residues 1–268 (MNIIEIKQLN…SAIVAHKMRS (268 aa)) lie on the Cytoplasmic side of the membrane. One can recognise an ABC transporter domain in the interval 4–242 (IEIKQLNRYF…VKNPSVFKGR (239 aa)). 40-47 (GQSGSGKS) is a binding site for ATP. Residues 269 to 289 (LLTMLGIIIGITSVVSVVALG) traverse the membrane as a helical segment. At 290–523 (NGSQQKILEN…TGTMKLLISS (234 aa)) the chain is on the periplasmic side. A helical transmembrane segment spans residues 524–544 (IAFISLIVGGIGVMNIMLVSV). Over 545–573 (TERTKEIGVRMAIGARQINILQQFLIEAV) the chain is Cytoplasmic. The helical transmembrane segment at 574-594 (LICLIGGVAGILLSVLIGVLF) threads the bilayer. Residues 595 to 607 (NSFITDFSMDFST) are Periplasmic-facing. The chain crosses the membrane as a helical span at residues 608–628 (ASIVTAVLFSTLIGVLFGYMP). The Cytoplasmic portion of the chain corresponds to 629 to 644 (AKKAAELNPITALAQE).

It belongs to the ABC transporter superfamily. Macrolide exporter (TC 3.A.1.122) family. As to quaternary structure, homodimer. Part of the tripartite efflux system MacAB-TdeA, which is composed of an inner membrane transporter, MacB, a periplasmic membrane fusion protein, MacA, and an outer membrane component, TdeA. The complex forms a large protein conduit and can translocate molecules across both the inner and outer membranes. Interacts with MacA.

It is found in the cell inner membrane. Functionally, part of the tripartite efflux system MacAB-TdeA. MacB is a non-canonical ABC transporter that contains transmembrane domains (TMD), which form a pore in the inner membrane, and an ATP-binding domain (NBD), which is responsible for energy generation. Confers resistance against macrolides. The polypeptide is Macrolide export ATP-binding/permease protein MacB (Aggregatibacter actinomycetemcomitans (Actinobacillus actinomycetemcomitans)).